Reading from the N-terminus, the 966-residue chain is Mitogen-activated protein kinase kinase kinase 13 (966 aa).

Disordered regions lie at residues 1 to 22, 30 to 49, and 90 to 114; these read MANFQEHLSCSSSPHLPFSESK, ELTAMGNHPSPKLLEDQQEK, and HDESETAVSQGNSNTVDGESTSGTE. Residues 95–113 are compositionally biased toward polar residues; sequence TAVSQGNSNTVDGESTSGT. The Protein kinase domain occupies 168 to 409; the sequence is ISELQWLGSG…FRQTLMHLDI (242 aa). ATP is bound by residues 174-182 and Lys-195; that span reads LGSGAQGAV. Catalysis depends on Asp-279, which acts as the Proton acceptor. 2 leucine-zipper regions span residues 433-454 and 486-507; these read VKKHFEKIKSEGTCIHRLDEEL and LSAIMLQLEMREKELIKREQAV. Disordered regions lie at residues 534-599, 611-655, 744-834, and 846-908; these read KRKG…RGSH, AQEN…HHPR, DIPS…RRQR, and STFS…GLSD. Positions 567-581 are enriched in low complexity; the sequence is SPLSGSPKMSTSSSK. Residues 582–594 show a composition bias toward basic residues; the sequence is SRYRSKPRHRRGN. Composition is skewed to polar residues over residues 611–629 and 785–795; these read AQENSPHPTYLHQAQSQYP and RSESSLGTSHL. Acidic residues predominate over residues 814–827; it reads DSSEEEEGEVDSEV. Residues 815–828 form an acidic region; sequence SSEEEEGEVDSEVE. The span at 846–855 shows a compositional bias: polar residues; it reads STFSSENFSV. A compositionally biased stretch (basic and acidic residues) spans 873–887; it reads LADKLEDRLAEKLDD.

It belongs to the protein kinase superfamily. STE Ser/Thr protein kinase family. MAP kinase kinase kinase subfamily. In terms of assembly, homodimer; forms dimers through the leucine-zipper motif. Interacts with the C-terminus of MAPK8IP1 through the kinase catalytic domain. Binds PRDX3. Associates with the IKK complex through the kinase domain. Requires Mg(2+) as cofactor. Autophosphorylated on serine and threonine residues. Expressed in the adult brain, liver, placenta and pancreas, with expression strongest in the pancreas.

Its subcellular location is the cytoplasm. It is found in the membrane. It catalyses the reaction L-seryl-[protein] + ATP = O-phospho-L-seryl-[protein] + ADP + H(+). The catalysed reaction is L-threonyl-[protein] + ATP = O-phospho-L-threonyl-[protein] + ADP + H(+). Activated by autophosphorylation and homodimerization. Activates the JUN N-terminal pathway through activation of the MAP kinase kinase MAP2K7. Acts synergistically with PRDX3 to regulate the activation of NF-kappa-B in the cytosol. This activation is kinase-dependent and involves activating the IKK complex, the IKBKB-containing complex that phosphorylates inhibitors of NF-kappa-B. This chain is Mitogen-activated protein kinase kinase kinase 13, found in Homo sapiens (Human).